A 230-amino-acid polypeptide reads, in one-letter code: Nicotinamide riboside kinase 2 (230 aa).

9-17 (GMTNGGKTT) is a binding site for ATP. Mg(2+) is bound by residues Thr16 and Asp35. Asp35 serves as the catalytic Proton acceptor. Residues 35–38 (DDFF) and 54–55 (WD) each bind substrate. Arg130 is an ATP binding site. Residues Arg131 and 136 to 137 (YT) contribute to the substrate site. Residues 134-136 (RNY) and 174-176 (KSR) contribute to the ATP site. The interval 191–230 (LLNRSQESAPSPARPARTQGPGRGCGHRTARPAASQQDSM) is disordered.

It belongs to the uridine kinase family. NRK subfamily. In terms of assembly, monomer. Interacts with ITGB1 alone or when associated with alpha-7, but not with alpha-5. In terms of tissue distribution, predominantly expressed in skeletal muscle and, at a much lower level, in the heart (at protein level). No expression in brain, kidney, liver, lung, pancreas nor placenta.

It carries out the reaction beta-nicotinamide D-riboside + ATP = beta-nicotinamide D-ribonucleotide + ADP + H(+). The enzyme catalyses beta-D-ribosylnicotinate + ATP = nicotinate beta-D-ribonucleotide + ADP + H(+). The protein operates within cofactor biosynthesis; NAD(+) biosynthesis. Its function is as follows. Catalyzes the phosphorylation of nicotinamide riboside (NR) and nicotinic acid riboside (NaR) to form nicotinamide mononucleotide (NMN) and nicotinic acid mononucleotide (NaMN). Reduces laminin matrix deposition and cell adhesion to laminin, but not to fibronectin. Involved in the regulation of PXN at the protein level and of PXN tyrosine phosphorylation. May play a role in the regulation of terminal myogenesis. This chain is Nicotinamide riboside kinase 2 (NMRK2), found in Homo sapiens (Human).